The following is a 425-amino-acid chain: Serine--tRNA ligase (425 aa).

230–232 (TAE) is a binding site for L-serine. 261–263 (RSE) is an ATP binding site. Glu-284 provides a ligand contact to L-serine. An ATP-binding site is contributed by 348–351 (EISS). Ser-384 provides a ligand contact to L-serine.

The protein belongs to the class-II aminoacyl-tRNA synthetase family. Type-1 seryl-tRNA synthetase subfamily. In terms of assembly, homodimer. The tRNA molecule binds across the dimer.

The protein resides in the cytoplasm. It catalyses the reaction tRNA(Ser) + L-serine + ATP = L-seryl-tRNA(Ser) + AMP + diphosphate + H(+). The catalysed reaction is tRNA(Sec) + L-serine + ATP = L-seryl-tRNA(Sec) + AMP + diphosphate + H(+). It functions in the pathway aminoacyl-tRNA biosynthesis; selenocysteinyl-tRNA(Sec) biosynthesis; L-seryl-tRNA(Sec) from L-serine and tRNA(Sec): step 1/1. Its function is as follows. Catalyzes the attachment of serine to tRNA(Ser). Is also able to aminoacylate tRNA(Sec) with serine, to form the misacylated tRNA L-seryl-tRNA(Sec), which will be further converted into selenocysteinyl-tRNA(Sec). The protein is Serine--tRNA ligase of Streptococcus pyogenes serotype M5 (strain Manfredo).